We begin with the raw amino-acid sequence, 313 residues long: Ribosomal RNA small subunit methyltransferase H (313 aa).

S-adenosyl-L-methionine is bound by residues 35–37, Asp55, Phe80, Asp102, and Gln109; that span reads GGH.

It belongs to the methyltransferase superfamily. RsmH family.

It is found in the cytoplasm. It carries out the reaction cytidine(1402) in 16S rRNA + S-adenosyl-L-methionine = N(4)-methylcytidine(1402) in 16S rRNA + S-adenosyl-L-homocysteine + H(+). Specifically methylates the N4 position of cytidine in position 1402 (C1402) of 16S rRNA. This is Ribosomal RNA small subunit methyltransferase H from Shewanella putrefaciens (strain CN-32 / ATCC BAA-453).